Reading from the N-terminus, the 838-residue chain is MKLLPREIEKLELHQAGFLAQKRLARGIRLNYTEAVALIATQILEFIRDGDKSVAELMDIGRQLLGRRQVLPAVLHLLYTVQVEGTFRDGTKLVTVHEPISLENGNLELALHGSFLPVPSLDKFPEVHEGVIIPGDMKYGDGSIIINHGRKAVVLKVVNTGDRPVQVGSHYHFIEVNPLLVFDRRKALGMRLNIPAGTAVRFEPGERKSVVLVNIGGNKVIRGGNGIVDGLVDDVNWTVLMETMERRGFKHLEDIDASEGIAGEDPRFTTMISREKYANMYGPTTGDKLRLGDTNLYARIEKDYTVYGDECVFGGGKVLREGMGQGIEQAEALSLDTVITNSVIIDYSGIYKADIGIKNGHIVGIGKAGNPDTMHGVQNNMLIGNKTEVIAGEGMIVTAGAIDCHVHFICPQLVYEAVSSGITTMVGGGTGPAYGTRATTCTPSPFDMKLMLQSTDSLPLNFGFTGKGNTAKPLELRHIVEAGAMGLKLHEDWGTTPAAIDNCLAVAEEYDIQVNIHTDTLNESGFVEHTINAFRGRTIHTYHSEGAGGGHAPDIIRVCGVKNVLPSSTNPTRPYTKNTVDEHLDMLMVCHHLDKNIPEDVAFAESRIRAETIAAEDILHDMGAISIISSDSQAMGRIGEVISRTWQTADKMKAQRGAIDPNMADDDNSRIKRYIAKYTINPAIANGFADLIGSVEVKKLADLVIWQPAFFGAKPEMIIKGGNIAWANMGDANASIPTPEPVISRPMFGAFGKAGSENSVAFVSKAALRKGVKELYGLKKRVVAVSNVRQLTKLDMKLNDALPEITVDPETYVVTANGEVLTCAPADSVPLSRNYFLF.

In terms of domain architecture, Urease spans 400 to 838 (GAIDCHVHFI…VPLSRNYFLF (439 aa)). Ni(2+) is bound by residues H405, H407, and K488. The residue at position 488 (K488) is an N6-carboxylysine. H490 provides a ligand contact to substrate. 2 residues coordinate Ni(2+): H517 and H543. H591 serves as the catalytic Proton donor. Residue D631 participates in Ni(2+) binding.

The protein in the C-terminal section; belongs to the metallo-dependent hydrolases superfamily. Urease alpha subunit family. Homohexamer. Other oligomeric forms may exist depending on pH and presence of salts. It depends on Ni(2+) as a cofactor. In terms of processing, carboxylation allows a single lysine to coordinate two nickel ions.

The enzyme catalyses urea + 2 H2O + H(+) = hydrogencarbonate + 2 NH4(+). It participates in nitrogen metabolism; urea degradation; CO(2) and NH(3) from urea (urease route): step 1/1. Its activity is regulated as follows. Requires the three urease accessory proteins URED, UREF AND UREG for its activation. Urea hydrolase involved in nitrogen recycling from ureide, purine, and arginine catabolism. In Arabidopsis thaliana (Mouse-ear cress), this protein is Urease.